The sequence spans 370 residues: Cytochrome b (370 aa).

The next 4 helical transmembrane spans lie at 25 to 45 (FGSM…FLAV), 69 to 90 (WMMQ…YIHI), 105 to 125 (WLSG…GYVL), and 170 to 190 (FFAL…LHVM). Heme b-binding residues include His-75 and His-89. 2 residues coordinate heme b: His-174 and His-188. His-193 is an a ubiquinone binding site. 4 helical membrane passes run 218–238 (YKDL…ISFY), 280–300 (LGGA…PFTH), 312–332 (FMQL…WTAT), and 339–358 (FTMI…ISNP).

The protein belongs to the cytochrome b family. As to quaternary structure, the cytochrome bc1 complex contains 3 respiratory subunits (MT-CYB, CYC1 and UQCRFS1), 2 core proteins (UQCRC1 and UQCRC2) and probably 6 low-molecular weight proteins. It depends on heme b as a cofactor.

It localises to the mitochondrion inner membrane. Its function is as follows. Component of the ubiquinol-cytochrome c reductase complex (complex III or cytochrome b-c1 complex) that is part of the mitochondrial respiratory chain. The b-c1 complex mediates electron transfer from ubiquinol to cytochrome c. Contributes to the generation of a proton gradient across the mitochondrial membrane that is then used for ATP synthesis. The polypeptide is Cytochrome b (MT-CYB) (Corallus hortulanus enydris (Garden tree boa)).